The sequence spans 82 residues: uncharacterized protein (82 aa).

Residues 22-82 form a disordered region; that stretch reads LRRSRSSRNG…WPPPCAFTPG (61 aa). Residues 47–58 show a composition bias toward basic and acidic residues; sequence HRGEPGHPRMEE. Pro residues predominate over residues 73 to 82; it reads WPPPCAFTPG.

This is an uncharacterized protein from Homo sapiens (Human).